A 504-amino-acid chain; its full sequence is Maturase K (504 aa).

This sequence belongs to the intron maturase 2 family. MatK subfamily.

It localises to the plastid. It is found in the chloroplast. Its function is as follows. Usually encoded in the trnK tRNA gene intron. Probably assists in splicing its own and other chloroplast group II introns. The polypeptide is Maturase K (Lobularia maritima (Sweet alyssum)).